A 74-amino-acid chain; its full sequence is Ribosome modulation factor (74 aa).

This sequence belongs to the ribosome modulation factor family.

The protein resides in the cytoplasm. Functionally, during stationary phase, converts 70S ribosomes to an inactive dimeric form (100S ribosomes). The sequence is that of Ribosome modulation factor from Cellvibrio japonicus (strain Ueda107) (Pseudomonas fluorescens subsp. cellulosa).